A 686-amino-acid chain; its full sequence is U-box domain-containing protein 19 (686 aa).

The 75-residue stretch at 277–351 (LNVDDLRCPI…QSYSKQNGVV (75 aa)) folds into the U-box domain. ARM repeat units follow at residues 406–445 (TFYR…NLSK), 448–489 (AGKT…YLSS), 491–533 (GDYS…SLLM), 536–577 (PDNH…KMAE), and 579–620 (PDGM…NLCH).

It catalyses the reaction S-ubiquitinyl-[E2 ubiquitin-conjugating enzyme]-L-cysteine + [acceptor protein]-L-lysine = [E2 ubiquitin-conjugating enzyme]-L-cysteine + N(6)-ubiquitinyl-[acceptor protein]-L-lysine.. It functions in the pathway protein modification; protein ubiquitination. Its function is as follows. Functions as an E3 ubiquitin ligase. The polypeptide is U-box domain-containing protein 19 (PUB19) (Arabidopsis thaliana (Mouse-ear cress)).